Consider the following 150-residue polypeptide: Large ribosomal subunit protein bL9 (150 aa).

This sequence belongs to the bacterial ribosomal protein bL9 family.

In terms of biological role, binds to the 23S rRNA. This is Large ribosomal subunit protein bL9 from Shewanella frigidimarina (strain NCIMB 400).